The primary structure comprises 258 residues: Ureidoacrylate amidohydrolase RutB (258 aa).

Positions 1–23 (MDRPTTYPMDQPAGFRDAQGRHG) are disordered. Residue Asp47 is the Proton acceptor of the active site. The active site involves Lys156. The active-site Nucleophile is Cys189.

Belongs to the isochorismatase family. RutB subfamily.

It catalyses the reaction (Z)-3-ureidoacrylate + H2O + H(+) = (Z)-3-aminoacrylate + NH4(+) + CO2. The catalysed reaction is (Z)-3-ureidoacrylate + H2O = (Z)-3-aminoacrylate + carbamate + H(+). It carries out the reaction (Z)-2-methylureidoacrylate + H2O + H(+) = (Z)-2-methylaminoacrylate + NH4(+) + CO2. In terms of biological role, hydrolyzes ureidoacrylate to form aminoacrylate and carbamate. The carbamate hydrolyzes spontaneously, thereby releasing one of the nitrogen atoms of the pyrimidine ring as ammonia and one of its carbon atoms as CO2. This chain is Ureidoacrylate amidohydrolase RutB, found in Methylobacterium radiotolerans (strain ATCC 27329 / DSM 1819 / JCM 2831 / NBRC 15690 / NCIMB 10815 / 0-1).